The primary structure comprises 52 residues: Ovomucoid (52 aa).

Residues 2-52 enclose the Kazal-like domain; the sequence is VDCSEYPKPACPKDYRPVCGSDNKTYGNKCNFCNAVVESNGTLTLNRFGKC. Intrachain disulfides connect cysteine 4/cysteine 34, cysteine 12/cysteine 31, and cysteine 20/cysteine 52. Asparagine 41 carries an N-linked (GlcNAc...) asparagine glycan.

Its subcellular location is the secreted. The protein is Ovomucoid of Coturnix delegorguei (Harlequin quail).